The sequence spans 134 residues: Small ribosomal subunit protein uS8c (134 aa).

It belongs to the universal ribosomal protein uS8 family. As to quaternary structure, part of the 30S ribosomal subunit.

The protein localises to the plastid. It localises to the chloroplast. In terms of biological role, one of the primary rRNA binding proteins, it binds directly to 16S rRNA central domain where it helps coordinate assembly of the platform of the 30S subunit. This chain is Small ribosomal subunit protein uS8c (rps8), found in Pelargonium hortorum (Common geranium).